The following is a 231-amino-acid chain: Transmembrane gamma-carboxyglutamic acid protein 3 (231 aa).

Residues 1–19 (MAVFLEAKDAHSVLKRFPR) constitute a propeptide that is removed on maturation. The Gla domain occupies 20–65 (ANEFLEELRQGTIERECMEEICSYEEVKEVFENKEKTMEFWKGYPN). The Extracellular portion of the chain corresponds to 20-78 (ANEFLEELRQGTIERECMEEICSYEEVKEVFENKEKTMEFWKGYPNAVYSVRDPSQSSD). 4-carboxyglutamate occurs at positions 22, 25, 26, 33, 35, 38, 39, 44, 45, 48, 51, 54, and 58. Cys36 and Cys41 are joined by a disulfide. A helical membrane pass occupies residues 79-101 (AMYVVVPLLGVALLIVIALFIIW). The Cytoplasmic portion of the chain corresponds to 102-231 (RCQLQKATRH…IVAANPGADK (130 aa)). Disordered regions lie at residues 140–165 (HSQGEPSGHREAANSPQVVLGPSRGG) and 182–231 (LSRL…GADK). Over residues 202-213 (ESSSEEASVSYS) the composition is skewed to low complexity.

Gla residues are produced after subsequent post-translational modifications of glutamate by a vitamin K-dependent gamma-carboxylase. In terms of tissue distribution, expressed in brain, lung, kidney and heart.

The protein localises to the membrane. This is Transmembrane gamma-carboxyglutamic acid protein 3 (PRRG3) from Homo sapiens (Human).